We begin with the raw amino-acid sequence, 869 residues long: Bifunctional uridylyltransferase/uridylyl-removing enzyme (869 aa).

A uridylyltransferase region spans residues 1–332 (MTDTPAERPD…QFDGEATPEP (332 aa)). The uridylyl-removing stretch occupies residues 333–691 (LGGGFSLRRG…RRAVPDNDAL (359 aa)). The HD domain occupies 450–572 (VDQHTLMVLR…VGTRERLDYL (123 aa)). 2 consecutive ACT domains span residues 692–774 (EVFV…RAVP) and 798–869 (RISL…LDPV).

It belongs to the GlnD family. Mg(2+) serves as cofactor.

The catalysed reaction is [protein-PII]-L-tyrosine + UTP = [protein-PII]-uridylyl-L-tyrosine + diphosphate. It catalyses the reaction [protein-PII]-uridylyl-L-tyrosine + H2O = [protein-PII]-L-tyrosine + UMP + H(+). Uridylyltransferase (UTase) activity is inhibited by glutamine, while glutamine activates uridylyl-removing (UR) activity. Modifies, by uridylylation and deuridylylation, the PII regulatory proteins (GlnB and homologs), in response to the nitrogen status of the cell that GlnD senses through the glutamine level. Under low glutamine levels, catalyzes the conversion of the PII proteins and UTP to PII-UMP and PPi, while under higher glutamine levels, GlnD hydrolyzes PII-UMP to PII and UMP (deuridylylation). Thus, controls uridylylation state and activity of the PII proteins, and plays an important role in the regulation of nitrogen assimilation and metabolism. The chain is Bifunctional uridylyltransferase/uridylyl-removing enzyme from Xanthomonas axonopodis pv. citri (strain 306).